The chain runs to 156 residues: Endogenous retrovirus group K member 10 Pro protein (156 aa).

The 76-residue stretch at 21–96 (FEGLVDTGAD…IPLNLWGRDL (76 aa)) folds into the Peptidase A2 domain. D26 is a catalytic residue. The G-patch domain maps to 111–156 (YSPTSQKIMTKMGYIPGKGLGKNEDGIKVPVEAKINQEREGIGYPF).

Belongs to the peptidase A2 family. HERV class-II K(HML-2) subfamily. In terms of assembly, active as a homodimer. In terms of processing, autoproteolytically processed at the N-terminus. Expected C-terminal autoprocessing not detected. The sequence shown is that of the processed Pro protein.

The catalysed reaction is Processing at the authentic HIV-1 PR recognition site and release of the mature p17 matrix and the p24 capsid protein, as a result of the cleavage of the -SQNY-|-PIVQ- cleavage site.. With respect to regulation, resistant to a number of clinically useful HIV-1 PR inhibitors. Inhibited by cyclic urea SD146. Its function is as follows. Retroviral proteases have roles in processing of the primary translation products and the maturation of the viral particle. Endogenous Pro proteins may have kept, lost or modified their original function during evolution. This endogenous protein has retained most of the characteristics of retroviral proteases. The protein is Endogenous retrovirus group K member 10 Pro protein (ERVK-10) of Homo sapiens (Human).